The chain runs to 175 residues: Large ribosomal subunit protein uL10 (175 aa).

The protein belongs to the universal ribosomal protein uL10 family. Part of the ribosomal stalk of the 50S ribosomal subunit. The N-terminus interacts with L11 and the large rRNA to form the base of the stalk. The C-terminus forms an elongated spine to which L12 dimers bind in a sequential fashion forming a multimeric L10(L12)X complex.

Its function is as follows. Forms part of the ribosomal stalk, playing a central role in the interaction of the ribosome with GTP-bound translation factors. This chain is Large ribosomal subunit protein uL10, found in Cyanothece sp. (strain PCC 7425 / ATCC 29141).